The sequence spans 347 residues: Ketol-acid reductoisomerase (NADP(+)) (347 aa).

A KARI N-terminal Rossmann domain is found at 3 to 182 (TKMFYDKDID…GSGCAGILET (180 aa)). NADP(+)-binding positions include 26-29 (YGAQ), Arg49, Ser53, and 83-86 (DELQ). The active site involves His108. Residue Gly134 coordinates NADP(+). The 146-residue stretch at 183–328 (TFEEETTEDL…KKVRAMMPWI (146 aa)) folds into the KARI C-terminal knotted domain. Residues Asp191, Glu195, Glu227, and Glu231 each contribute to the Mg(2+) site. Residue Ser252 coordinates substrate.

It belongs to the ketol-acid reductoisomerase family. It depends on Mg(2+) as a cofactor.

It carries out the reaction (2R)-2,3-dihydroxy-3-methylbutanoate + NADP(+) = (2S)-2-acetolactate + NADPH + H(+). The catalysed reaction is (2R,3R)-2,3-dihydroxy-3-methylpentanoate + NADP(+) = (S)-2-ethyl-2-hydroxy-3-oxobutanoate + NADPH + H(+). Its pathway is amino-acid biosynthesis; L-isoleucine biosynthesis; L-isoleucine from 2-oxobutanoate: step 2/4. The protein operates within amino-acid biosynthesis; L-valine biosynthesis; L-valine from pyruvate: step 2/4. Involved in the biosynthesis of branched-chain amino acids (BCAA). Catalyzes an alkyl-migration followed by a ketol-acid reduction of (S)-2-acetolactate (S2AL) to yield (R)-2,3-dihydroxy-isovalerate. In the isomerase reaction, S2AL is rearranged via a Mg-dependent methyl migration to produce 3-hydroxy-3-methyl-2-ketobutyrate (HMKB). In the reductase reaction, this 2-ketoacid undergoes a metal-dependent reduction by NADPH to yield (R)-2,3-dihydroxy-isovalerate. The polypeptide is Ketol-acid reductoisomerase (NADP(+)) (Leuconostoc mesenteroides subsp. cremoris).